The primary structure comprises 519 residues: Pleckstrin homology domain-containing family A member 8 (519 aa).

Positions 1–93 (MEGVLYKWTN…WLVALGSAKA (93 aa)) constitute a PH domain. Thr-139 is modified (phosphothreonine). At Ser-145 the chain carries Phosphoserine. Residue Thr-153 is modified to Phosphothreonine. Residues 274-302 (GEDNLGNHDSSLAQPASDSSSSPPESHWE) form a disordered region. Over residues 282–298 (DSSLAQPASDSSSSPPE) the composition is skewed to low complexity. The segment at 310-519 (TFFSTMNTSF…VHGLESDEVV (210 aa)) is glycolipid transfer protein homology domain.

Homodimer. Interacts with ARF1; the interaction together with phosphatidylinositol 4-phosphate binding is required for FAPP2 GlcCer transfer ability.

The protein resides in the golgi apparatus. It is found in the trans-Golgi network membrane. Its subcellular location is the membrane. Functionally, cargo transport protein that is required for apical transport from the trans-Golgi network (TGN). Transports AQP2 from the trans-Golgi network (TGN) to sites of AQP2 phosphorylation. Mediates the non-vesicular transport of glucosylceramide (GlcCer) from the trans-Golgi network (TGN) to the plasma membrane and plays a pivotal role in the synthesis of complex glycosphingolipids. Binding of both phosphatidylinositol 4-phosphate (PIP) and ARF1 are essential for the GlcCer transfer ability. Also required for primary cilium formation, possibly by being involved in the transport of raft lipids to the apical membrane, and for membrane tubulation. In Canis lupus familiaris (Dog), this protein is Pleckstrin homology domain-containing family A member 8 (PLEKHA8).